Reading from the N-terminus, the 660-residue chain is Arginine--tRNA ligase, cytoplasmic (660 aa).

Positions 1–72 are could be involved in the assembly of the multisynthetase complex; it reads MELPVCFYEE…LEEKKKSSKS (72 aa). Residues 200-202, His211, Tyr384, Asp388, and Gln412 contribute to the L-arginine site; that span reads SPN. The 'HIGH' region signature appears at 201–212; that stretch reads PNIAKEMHVGHL. The interval 529–543 is interaction with tRNA; that stretch reads NTAAYLLYAYTRIRS.

It belongs to the class-I aminoacyl-tRNA synthetase family. Monomer; also part of a multisubunit complex that groups tRNA ligases for Arg, Asp, Glu, Gln, Ile, Leu, Lys, Met and Pro.

The protein resides in the cytoplasm. Its subcellular location is the cytosol. The catalysed reaction is tRNA(Arg) + L-arginine + ATP = L-arginyl-tRNA(Arg) + AMP + diphosphate. Forms part of a macromolecular complex that catalyzes the attachment of specific amino acids to cognate tRNAs during protein synthesis. This chain is Arginine--tRNA ligase, cytoplasmic (rars1), found in Xenopus tropicalis (Western clawed frog).